Consider the following 141-residue polypeptide: Large ribosomal subunit protein uL16 (141 aa).

It belongs to the universal ribosomal protein uL16 family. As to quaternary structure, part of the 50S ribosomal subunit.

In terms of biological role, binds 23S rRNA and is also seen to make contacts with the A and possibly P site tRNAs. The chain is Large ribosomal subunit protein uL16 from Campylobacter lari (strain RM2100 / D67 / ATCC BAA-1060).